A 989-amino-acid polypeptide reads, in one-letter code: Cellulose synthase A catalytic subunit 4 [UDP-forming] (989 aa).

The Cytoplasmic portion of the chain corresponds to Met1 to Lys184. Positions 9, 12, 20, 23, 28, 31, 43, and 46 each coordinate Zn(2+). The RING-type; degenerate zinc-finger motif lies at Cys9–Gly47. Positions Lys138–Ala149 are enriched in basic residues. The disordered stretch occupies residues Lys138–Glu158. A helical membrane pass occupies residues Leu185–Tyr205. The Extracellular segment spans residues Arg206–Ser213. Residues Ala214 to Leu234 traverse the membrane as a helical segment. The Cytoplasmic segment spans residues Asp235–Ser772. UDP-alpha-D-glucose is bound by residues Ser272, Lys278, Glu279, and Asp308. Asp308 is a catalytic residue. Residues Val362 to Thr389 are a coiled coil. Lys449 serves as a coordination point for UDP-alpha-D-glucose. Residues Lys450 and Asp474 each coordinate Mn(2+). Asp688 is a catalytic residue. A helical membrane pass occupies residues Leu773–Ile793. Residues Pro794–Asn798 lie on the Extracellular side of the membrane. The helical transmembrane segment at Ala799–Leu819 threads the bilayer. Residues Arg820–Phe835 lie on the Cytoplasmic side of the membrane. The chain crosses the membrane as a helical span at residues Trp836–Ile856. At Ala857–Thr884 the chain is on the extracellular side. Asn862 is a glycosylation site (N-linked (GlcNAc...) asparagine). A helical transmembrane segment spans residues Thr885–Phe905. Residues Ser906–Trp916 lie on the Cytoplasmic side of the membrane. A helical membrane pass occupies residues Gly917–Leu937. Residues Lys938–Arg946 are Extracellular-facing. A helical membrane pass occupies residues Thr947–Val967. Residues Lys968–Cys989 lie on the Cytoplasmic side of the membrane.

The protein belongs to the glycosyltransferase 2 family. Plant cellulose synthase subfamily. The cofactor is Mn(2+). Zn(2+) serves as cofactor.

It localises to the cell membrane. The enzyme catalyses [(1-&gt;4)-beta-D-glucosyl](n) + UDP-alpha-D-glucose = [(1-&gt;4)-beta-D-glucosyl](n+1) + UDP + H(+). It participates in glycan metabolism; plant cellulose biosynthesis. Catalytic subunit of cellulose synthase terminal complexes ('rosettes'), required for beta-1,4-glucan microfibril crystallization, a major mechanism of the cell wall formation. Involved in the secondary cell wall formation. This chain is Cellulose synthase A catalytic subunit 4 [UDP-forming] (CESA4), found in Oryza sativa subsp. indica (Rice).